The sequence spans 286 residues: Probable aquaporin PIP2-5 (286 aa).

At Met-1 the chain carries N-acetylmethionine. Over residues 1-18 the composition is skewed to basic and acidic residues; the sequence is MTKEVVGDKRSFSGKDYQ. A disordered region spans residues 1 to 23; it reads MTKEVVGDKRSFSGKDYQDPPPE. At 1-38 the chain is on the cytoplasmic side; the sequence is MTKEVVGDKRSFSGKDYQDPPPEPLFDATELGKWSFYR. Position 3 is an N6,N6-dimethyllysine (Lys-3). Residues 39 to 59 form a helical membrane-spanning segment; sequence ALIAEFIATLLFLYVTIMTVI. The Extracellular segment spans residues 60–75; the sequence is GYKSQTDPALNPDQCT. A helical transmembrane segment spans residues 76–96; that stretch reads GVGVLGIAWAFGGMIFILVYC. The Cytoplasmic segment spans residues 97–124; sequence TAGISGGHINPAVTFGLLLARKVTLVRA. The NPA 1 motif lies at 106-108; it reads NPA. The chain crosses the membrane as a helical span at residues 125 to 145; it reads VMYMVAQCLGAICGVALVKAF. At 146 to 165 the chain is on the extracellular side; it reads QSAYFTRYGGGANGLSDGYS. Residues 166 to 186 traverse the membrane as a helical segment; the sequence is IGTGVAAEIIGTFVLVYTVFS. Over 187–200 the chain is Cytoplasmic; the sequence is ATDPKRSARDSHVP. A helical membrane pass occupies residues 201–221; the sequence is VLAPLPIGFAVFIVHLATIPI. Residues 222 to 248 lie on the Extracellular side of the membrane; sequence TGTGINPARSLGAAIIYNKDKAWDHHW. The NPA 2 motif lies at 227 to 229; the sequence is NPA. A helical transmembrane segment spans residues 249 to 269; sequence IFWVGPFAGAAIAAFYHQFVL. The Cytoplasmic segment spans residues 270 to 286; sequence RAGAIKALGSFRSQPHV. 2 positions are modified to phosphoserine: Ser-279 and Ser-282.

Belongs to the MIP/aquaporin (TC 1.A.8) family. PIP (TC 1.A.8.11) subfamily. In terms of tissue distribution, expressed in green siliques.

It is found in the cell membrane. Its function is as follows. Aquaporins facilitate the transport of water and small neutral solutes across cell membranes. This Arabidopsis thaliana (Mouse-ear cress) protein is Probable aquaporin PIP2-5 (PIP2-5).